A 993-amino-acid chain; its full sequence is Vacuolar membrane protease (993 aa).

Over 1-24 (MSPAMANPRVRKFNPIAFTPLPVT) the chain is Cytoplasmic. Residues 25–45 (LITTIVYLAVLILVLVTYLVV) traverse the membrane as a helical segment. The Vacuolar segment spans residues 46–391 (PPAPTLEMSP…SAFAVFRLHT (346 aa)). Asn-59, Asn-116, and Asn-119 each carry an N-linked (GlcNAc...) asparagine glycan. The Zn(2+) site is built by His-175 and Asp-187. The active-site Proton acceptor is Glu-221. Glu-222 is a Zn(2+) binding site. A glycan (N-linked (GlcNAc...) asparagine) is linked at Asn-238. Positions 247 and 320 each coordinate Zn(2+). The chain crosses the membrane as a helical span at residues 392-412 (LFALSVTLLVSAPLVLFITSI). Topologically, residues 413–447 (ALSKTDRMYLFSMSKSLGGTSETVSLRGLRGLFRT) are cytoplasmic. Residues 448-468 (PIILTVTTVITIGLAYLLEKI) form a helical membrane-spanning segment. At 469 to 475 (NPYIVHS) the chain is on the vacuolar side. The helical transmembrane segment at 476–496 (SQFAVWSMMLSVWIFVAWFLA) threads the bilayer. Residues 497 to 509 (RVADFFRPSALHR) lie on the Cytoplasmic side of the membrane. The helical transmembrane segment at 510 to 530 (AYSYTWIFIATWIMLVISTVY) threads the bilayer. Residues 531-534 (ANQK) are Vacuolar-facing. A helical membrane pass occupies residues 535–555 (GIAAGYFIFFYFAAVFLATWV). Residues 556–672 (SYLELFSLPR…WSWTLPRWTW (117 aa)) lie on the Cytoplasmic side of the membrane. Residues 579 to 621 (RRSSSLSSRLLTPSADELPSDIGPNGAENLGDPDETDPTESTS) form a disordered region. The helical transmembrane segment at 673–693 (ILQLLLLAPIVIILVGQVGLL) threads the bilayer. Topologically, residues 694–709 (LTTAMSQIGSDGVSTF) are vacuolar. Residues 710–730 (IVYLACALLSTLLFAPLFPFI) traverse the membrane as a helical segment. At 731-737 (HRFTYHV) the chain is on the cytoplasmic side. Residues 738 to 758 (PTFLLLIFIGTLIYNLVAFPF) form a helical membrane-spanning segment. Topologically, residues 759 to 993 (SPANRLKIFF…VEASHDFIIQ (235 aa)) are vacuolar. N-linked (GlcNAc...) asparagine glycosylation is found at Asn-806, Asn-847, and Asn-955.

It belongs to the peptidase M28 family. Requires Zn(2+) as cofactor.

It is found in the vacuole membrane. Its function is as follows. May be involved in vacuolar sorting and osmoregulation. This is Vacuolar membrane protease from Paracoccidioides lutzii (strain ATCC MYA-826 / Pb01) (Paracoccidioides brasiliensis).